We begin with the raw amino-acid sequence, 374 residues long: Probable trehalose-phosphate phosphatase 9 (374 aa).

It belongs to the trehalose phosphatase family. It depends on a divalent metal cation as a cofactor.

The enzyme catalyses alpha,alpha-trehalose 6-phosphate + H2O = alpha,alpha-trehalose + phosphate. It participates in glycan biosynthesis; trehalose biosynthesis. Removes the phosphate from trehalose 6-phosphate to produce free trehalose. Trehalose accumulation in plant may improve abiotic stress tolerance. The protein is Probable trehalose-phosphate phosphatase 9 (TPP9) of Oryza sativa subsp. japonica (Rice).